We begin with the raw amino-acid sequence, 229 residues long: Small ribosomal subunit protein uS2c (229 aa).

This sequence belongs to the universal ribosomal protein uS2 family.

It is found in the plastid. The protein resides in the chloroplast. The protein is Small ribosomal subunit protein uS2c (rps2) of Trieres chinensis (Marine centric diatom).